The primary structure comprises 326 residues: N-acetyl-gamma-glutamyl-phosphate reductase (326 aa).

Cys-155 is an active-site residue.

It belongs to the NAGSA dehydrogenase family. Type 1 subfamily.

It localises to the cytoplasm. The enzyme catalyses N-acetyl-L-glutamate 5-semialdehyde + phosphate + NADP(+) = N-acetyl-L-glutamyl 5-phosphate + NADPH + H(+). It functions in the pathway amino-acid biosynthesis; L-arginine biosynthesis; N(2)-acetyl-L-ornithine from L-glutamate: step 3/4. In terms of biological role, catalyzes the NADPH-dependent reduction of N-acetyl-5-glutamyl phosphate to yield N-acetyl-L-glutamate 5-semialdehyde. The chain is N-acetyl-gamma-glutamyl-phosphate reductase from Shewanella denitrificans (strain OS217 / ATCC BAA-1090 / DSM 15013).